Consider the following 320-residue polypeptide: MQTRNAFSWIKKEITRSISVLLMIYIITRAPISNAYPIFAQQGYENPREATGRIVCANCHLANKPVDIEVPQAILPDTVFEAVVRIPYDMQVKQVLANGKKGALNVGAVLILPEGFELAPPDRLSPEIKEKIGNLSFQSYRPTKKNIIVIGPVPGKKYSEITFPILSPDPATKRDVYFLKYPIYVGGTRGRGQIYPDGSKSNNNVYNATATGVVNKKIRKEKGGYEITIVDGSDGREVIDIIPPGPELLVSEGESIKLDQPLTSNPNVGGFGQGDAEIVLQDPLRVQGLLLFLASIILAQIFLVLKKKQFEKVQLSEMNF.

The N-terminal stretch at 1–35 is a signal peptide; that stretch reads MQTRNAFSWIKKEITRSISVLLMIYIITRAPISNA. The heme site is built by Y36, C56, C59, and H60. The chain crosses the membrane as a helical span at residues 286 to 305; that stretch reads VQGLLLFLASIILAQIFLVL.

The protein belongs to the cytochrome f family. In terms of assembly, the 4 large subunits of the cytochrome b6-f complex are cytochrome b6, subunit IV (17 kDa polypeptide, petD), cytochrome f and the Rieske protein, while the 4 small subunits are PetG, PetL, PetM and PetN. The complex functions as a dimer. It depends on heme as a cofactor.

It localises to the plastid. Its subcellular location is the chloroplast thylakoid membrane. Functionally, component of the cytochrome b6-f complex, which mediates electron transfer between photosystem II (PSII) and photosystem I (PSI), cyclic electron flow around PSI, and state transitions. The sequence is that of Cytochrome f (petA) from Vicia faba (Broad bean).